Reading from the N-terminus, the 306-residue chain is tRNA dimethylallyltransferase (306 aa).

ATP is bound at residue 6–13 (GPTASGKS). A substrate-binding site is contributed by 8–13 (TASGKS).

The protein belongs to the IPP transferase family. Monomer. The cofactor is Mg(2+).

The catalysed reaction is adenosine(37) in tRNA + dimethylallyl diphosphate = N(6)-dimethylallyladenosine(37) in tRNA + diphosphate. Functionally, catalyzes the transfer of a dimethylallyl group onto the adenine at position 37 in tRNAs that read codons beginning with uridine, leading to the formation of N6-(dimethylallyl)adenosine (i(6)A). This Sphingopyxis alaskensis (strain DSM 13593 / LMG 18877 / RB2256) (Sphingomonas alaskensis) protein is tRNA dimethylallyltransferase.